The primary structure comprises 631 residues: Mitochondrial Rho GTPase 1 (631 aa).

Over 1 to 605 (MPAGRGRPLR…TQADLKSSTF (605 aa)) the chain is Cytoplasmic. In terms of domain architecture, Miro 1 spans 15–181 (KKDVRILLVG…FYYAQKAVLH (167 aa)). R27, G29, K30, T31, and S32 together coordinate GTP. Position 31 (T31) interacts with Mg(2+). The Mg(2+) site is built by P48 and D70. S72 contributes to the GTP binding site. K105 is subject to N6-acetyllysine. GTP is bound by residues N131, K132, D134, A162, and K163. A Glycyl lysine isopeptide (Lys-Gly) (interchain with G-Cter in ubiquitin) cross-link involves residue K166. In terms of domain architecture, EF-hand 1 spans 197 to 232 (ACIKALTRIFKISDQDNDGTLNDAELNFFQRICFNT). Ca(2+) contacts are provided by D210, D212, D214, T216, and E221. Residue K248 forms a Glycyl lysine isopeptide (Lys-Gly) (interchain with G-Cter in ubiquitin) linkage. In terms of domain architecture, EF-hand 2 spans 317-352 (HAYLFLQSTFDKHDLDRDCALSPDELKDLFKVFPYI). 5 residues coordinate Ca(2+): D330, D332, D334, A336, and E341. A Miro 2 domain is found at 429–592 (RNVFRCNVIG…FVKLTTMAMY (164 aa)). The GTP site is built by N441, C442, G443, K444, S445, G446, K460, K541, D543, T571, and C572. Position 441 (N441) interacts with Mg(2+). K585 participates in a covalent cross-link: Glycyl lysine isopeptide (Lys-Gly) (interchain with G-Cter in ubiquitin). The chain crosses the membrane as a helical; Anchor for type IV membrane protein span at residues 606–628 (WLRASFGATVFAVLGFAMYKALL). Residues 629 to 631 (KQR) lie on the Mitochondrial intermembrane side of the membrane.

This sequence belongs to the mitochondrial Rho GTPase family. As to quaternary structure, homodimer. Interacts with the kinesin-binding proteins TRAK1/OIP106 and TRAK2/GRIF1, forming a link between mitochondria and the trafficking apparatus of the microtubules. Interacts with RAP1GDS1. Interacts with ARMCX1. Found in a complex with KIF5B, OGT, RHOT2 and TRAK1. In terms of processing, ubiquitinated by PRKN during mitophagy, leading to its degradation and enhancement of mitophagy. Deubiquitinated by USP30. Post-translationally, acetylation on Lys-105 decreases sensitivity of mitochondrial transport to elevated Ca(2+) levels, increases mitochondrial transport and promotes axon growth. Deacetylated by HDAC6 which blocks mitochondrial transport and mediates axon growth inhibition.

Its subcellular location is the mitochondrion outer membrane. It catalyses the reaction GTP + H2O = GDP + phosphate + H(+). The catalysed reaction is ATP + H2O = ADP + phosphate + H(+). The enzyme catalyses UTP + H2O = UDP + phosphate + H(+). Its function is as follows. Atypical mitochondrial nucleoside-triphosphatase (NTPase) involved in mitochondrial trafficking. Probably involved in control of anterograde transport of mitochondria and their subcellular distribution. Promotes mitochondrial fission during high calcium conditions. Can hydrolyze GTP, ATP and UTP. This Bos taurus (Bovine) protein is Mitochondrial Rho GTPase 1 (RHOT1).